The primary structure comprises 160 residues: SsrA-binding protein (160 aa).

Belongs to the SmpB family.

It is found in the cytoplasm. Functionally, required for rescue of stalled ribosomes mediated by trans-translation. Binds to transfer-messenger RNA (tmRNA), required for stable association of tmRNA with ribosomes. tmRNA and SmpB together mimic tRNA shape, replacing the anticodon stem-loop with SmpB. tmRNA is encoded by the ssrA gene; the 2 termini fold to resemble tRNA(Ala) and it encodes a 'tag peptide', a short internal open reading frame. During trans-translation Ala-aminoacylated tmRNA acts like a tRNA, entering the A-site of stalled ribosomes, displacing the stalled mRNA. The ribosome then switches to translate the ORF on the tmRNA; the nascent peptide is terminated with the 'tag peptide' encoded by the tmRNA and targeted for degradation. The ribosome is freed to recommence translation, which seems to be the essential function of trans-translation. The sequence is that of SsrA-binding protein from Dinoroseobacter shibae (strain DSM 16493 / NCIMB 14021 / DFL 12).